Here is a 602-residue protein sequence, read N- to C-terminus: Elongation factor 4 (602 aa).

In terms of domain architecture, tr-type G spans 7–189 (KYIRNFSIVA…AIVSKVPAPY (183 aa)). GTP-binding positions include 19 to 24 (DHGKST) and 136 to 139 (NKID).

It belongs to the TRAFAC class translation factor GTPase superfamily. Classic translation factor GTPase family. LepA subfamily.

The protein localises to the cell membrane. The enzyme catalyses GTP + H2O = GDP + phosphate + H(+). In terms of biological role, required for accurate and efficient protein synthesis under certain stress conditions. May act as a fidelity factor of the translation reaction, by catalyzing a one-codon backward translocation of tRNAs on improperly translocated ribosomes. Back-translocation proceeds from a post-translocation (POST) complex to a pre-translocation (PRE) complex, thus giving elongation factor G a second chance to translocate the tRNAs correctly. Binds to ribosomes in a GTP-dependent manner. The chain is Elongation factor 4 from Clostridium botulinum (strain Loch Maree / Type A3).